Here is a 48-residue protein sequence, read N- to C-terminus: ATP synthase protein 8 (48 aa).

Residues 4–24 (LVPFFFVNQVVYAFVILTVLI) traverse the membrane as a helical segment.

Belongs to the ATPase protein 8 family. F-type ATPases have 2 components, CF(1) - the catalytic core - and CF(0) - the membrane proton channel.

The protein localises to the mitochondrion membrane. In terms of biological role, mitochondrial membrane ATP synthase (F(1)F(0) ATP synthase or Complex V) produces ATP from ADP in the presence of a proton gradient across the membrane which is generated by electron transport complexes of the respiratory chain. F-type ATPases consist of two structural domains, F(1) - containing the extramembraneous catalytic core and F(0) - containing the membrane proton channel, linked together by a central stalk and a peripheral stalk. During catalysis, ATP synthesis in the catalytic domain of F(1) is coupled via a rotary mechanism of the central stalk subunits to proton translocation. Part of the complex F(0) domain. Minor subunit located with subunit a in the membrane. The polypeptide is ATP synthase protein 8 (atp8) (Aspergillus amstelodami).